The following is a 287-amino-acid chain: MATPSQHDLRNDFRALLASGKCYYTASTFDPMSARIAADLGFEVGILGGSVASLQVLAAPDFALITLSEFTEQATRIGRVARLPIIADADHGYGNALNVMRTIVELERAGVAALTIEDTLLPAKYGHKSTDLIPVEEAVGKLKAALEARIDPIMSIIARTNAGQLSTEETISRVKAYQAVGVDGICMVGIRDFAHLEEISQHISIPIMLVAYDNPELRDRERLAANGVRIVVNGHAAYFAAIKATYDCLREQRGIAEGTLDASELSTRYSTLEENRVWANKYMDVQE.

Ser50 lines the substrate pocket. Position 88 (Asp88) interacts with Mg(2+). Positions 159 and 235 each coordinate substrate.

Belongs to the isocitrate lyase/PEP mutase superfamily. Oxaloacetate decarboxylase family. In terms of assembly, homotetramer; dimer of dimers. The cofactor is Mg(2+).

It carries out the reaction oxaloacetate + H(+) = pyruvate + CO2. In terms of biological role, catalyzes the decarboxylation of oxaloacetate into pyruvate. Seems to play a role in maintaining cellular concentrations of bicarbonate and pyruvate. The polypeptide is Oxaloacetate decarboxylase (Marinomonas sp. (strain MWYL1)).